Consider the following 214-residue polypeptide: Large ribosomal subunit protein uL4 (214 aa).

The interval 56-86 is disordered; sequence THKVKNRAEVSGTGKKPWKQKSTGKARAGSK. The segment covering 71 to 85 has biased composition (basic residues); that stretch reads KPWKQKSTGKARAGS.

It belongs to the universal ribosomal protein uL4 family. As to quaternary structure, part of the 50S ribosomal subunit.

Its function is as follows. One of the primary rRNA binding proteins, this protein initially binds near the 5'-end of the 23S rRNA. It is important during the early stages of 50S assembly. It makes multiple contacts with different domains of the 23S rRNA in the assembled 50S subunit and ribosome. Functionally, forms part of the polypeptide exit tunnel. The protein is Large ribosomal subunit protein uL4 of Mesomycoplasma hyopneumoniae (strain 232) (Mycoplasma hyopneumoniae).